Here is a 97-residue protein sequence, read N- to C-terminus: Mitochondrial import inner membrane translocase subunit Tim8 A (97 aa).

The Twin CX3C motif signature appears at cysteine 43–cysteine 66. Cystine bridges form between cysteine 43-cysteine 66 and cysteine 47-cysteine 62. A phosphoserine mark is found at serine 57, serine 87, serine 94, and serine 96.

This sequence belongs to the small Tim family. Heterohexamer; composed of 3 copies of TIMM8A and 3 copies of TIMM13, named soluble 70 kDa complex. Associates with the TIM22 complex, whose core is composed of TIMM22. In terms of tissue distribution, present at high level in liver and brain, and at lower level in muscle and heart. In CNS sections, it is predominantly present in the soma and the dendritic portion of the Purkinje cells of the cerebellum, but not in the glial cells. Scattered expression also is also detected in the brain stem, olfactory bulb, substantia nigra, hippocampus and striatum (at protein level). Ubiquitously expressed.

The protein resides in the mitochondrion inner membrane. Functionally, mitochondrial intermembrane chaperone that participates in the import and insertion of some multi-pass transmembrane proteins into the mitochondrial inner membrane. Also required for the transfer of beta-barrel precursors from the TOM complex to the sorting and assembly machinery (SAM complex) of the outer membrane. Acts as a chaperone-like protein that protects the hydrophobic precursors from aggregation and guide them through the mitochondrial intermembrane space. The TIMM8-TIMM13 complex mediates the import of proteins such as TIMM23, SLC25A12/ARALAR1 and SLC25A13/ARALAR2, while the predominant TIMM9-TIMM10 70 kDa complex mediates the import of much more proteins. The protein is Mitochondrial import inner membrane translocase subunit Tim8 A (Timm8a1) of Mus musculus (Mouse).